A 286-amino-acid chain; its full sequence is Nucleotide-binding protein HS_1178 (286 aa).

An ATP-binding site is contributed by 8–15; that stretch reads GRSGAGKS. GTP is bound at residue 56 to 59; it reads DIRN.

It belongs to the RapZ-like family.

Displays ATPase and GTPase activities. The polypeptide is Nucleotide-binding protein HS_1178 (Histophilus somni (strain 129Pt) (Haemophilus somnus)).